Reading from the N-terminus, the 314-residue chain is Nodulation protein D 1 (314 aa).

Positions 6-63 (LDLNLLVALDALMTERNLTAAARSINLSQPAMSAAVGRLRTYFNDDLFTMVGRELVPT) constitute an HTH lysR-type domain. Residues 23–42 (LTAAARSINLSQPAMSAAVG) constitute a DNA-binding region (H-T-H motif).

Belongs to the LysR transcriptional regulatory family.

Its function is as follows. NodD regulates the expression of the nodABCFE genes which encode other nodulation proteins. NodD is also a negative regulator of its own expression. Binds flavonoids as inducers. The protein is Nodulation protein D 1 (nodD1) of Rhizobium leguminosarum bv. phaseoli.